Here is a 245-residue protein sequence, read N- to C-terminus: 4-hydroxy-tetrahydrodipicolinate reductase (245 aa).

Residues 7 to 12 (GAKGKV), D33, 75 to 77 (GTT), and 102 to 105 (APNF) each bind NAD(+). H132 acts as the Proton donor/acceptor in catalysis. H133 provides a ligand contact to (S)-2,3,4,5-tetrahydrodipicolinate. The Proton donor role is filled by K136. 142–143 (GT) contributes to the (S)-2,3,4,5-tetrahydrodipicolinate binding site.

Belongs to the DapB family.

Its subcellular location is the cytoplasm. It carries out the reaction (S)-2,3,4,5-tetrahydrodipicolinate + NAD(+) + H2O = (2S,4S)-4-hydroxy-2,3,4,5-tetrahydrodipicolinate + NADH + H(+). It catalyses the reaction (S)-2,3,4,5-tetrahydrodipicolinate + NADP(+) + H2O = (2S,4S)-4-hydroxy-2,3,4,5-tetrahydrodipicolinate + NADPH + H(+). The protein operates within amino-acid biosynthesis; L-lysine biosynthesis via DAP pathway; (S)-tetrahydrodipicolinate from L-aspartate: step 4/4. Catalyzes the conversion of 4-hydroxy-tetrahydrodipicolinate (HTPA) to tetrahydrodipicolinate. In Mycolicibacterium paratuberculosis (strain ATCC BAA-968 / K-10) (Mycobacterium paratuberculosis), this protein is 4-hydroxy-tetrahydrodipicolinate reductase.